We begin with the raw amino-acid sequence, 362 residues long: MAHHDPINLMTPPAGLAQLNERSREIFRQIVESYLATGEPVGSRNISRLIAVPLSPASVRNVMADLEQLGLIYAPHTSAGRLPTEAGLRFFVDALMQVGDMTEAERQSIQSQLASVGRAQSVEAALDEALTRLSGLTRAAAVVLTAKSNTRLKHIEFVRLEPERALVVLVGEDGQVENRVLALPPGVPSSALTEASNFLNARIRGRTLAEARLELETALAHDRAELDQLTQKVIAAGVASWSGGDSDDRQLIVRGHANLLEDLHALEDLERVRRLFDDLETKRGVVDLLGRAENADGVRIFIGSENKLFSLSGSSTIVSPYSDATGRIVGVLGVIGPTRLNYARVIPTVDYAARLVSRLLGG.

It belongs to the HrcA family.

In terms of biological role, negative regulator of class I heat shock genes (grpE-dnaK-dnaJ and groELS operons). Prevents heat-shock induction of these operons. The protein is Heat-inducible transcription repressor HrcA of Bradyrhizobium sp. (strain BTAi1 / ATCC BAA-1182).